The following is a 151-amino-acid chain: Deoxyuridine 5'-triphosphate nucleotidohydrolase (151 aa).

Substrate is bound by residues 70 to 72 (RSG), Asn-83, 87 to 89 (LID), and Met-97.

This sequence belongs to the dUTPase family. Mg(2+) serves as cofactor.

It carries out the reaction dUTP + H2O = dUMP + diphosphate + H(+). Its pathway is pyrimidine metabolism; dUMP biosynthesis; dUMP from dCTP (dUTP route): step 2/2. Functionally, this enzyme is involved in nucleotide metabolism: it produces dUMP, the immediate precursor of thymidine nucleotides and it decreases the intracellular concentration of dUTP so that uracil cannot be incorporated into DNA. The protein is Deoxyuridine 5'-triphosphate nucleotidohydrolase of Yersinia enterocolitica serotype O:8 / biotype 1B (strain NCTC 13174 / 8081).